An 842-amino-acid chain; its full sequence is Outer membrane usher protein LpfC (842 aa).

The first 21 residues, M1 to A21, serve as a signal peptide directing secretion. C819 and C841 are joined by a disulfide.

Belongs to the fimbrial export usher family.

It localises to the cell outer membrane. Its function is as follows. Involved in the export and assembly of LpfA fimbrial subunits across the outer membrane. In Salmonella typhimurium (strain LT2 / SGSC1412 / ATCC 700720), this protein is Outer membrane usher protein LpfC (lpfC).